Consider the following 737-residue polypeptide: O-GlcNAcase BT_4395 (737 aa).

Residues 1-21 form the signal peptide; sequence MKNNKIYLLGACLLCAVTTFA. A catalytic domain region spans residues 148–433; sequence VRYRGVVEGF…WKDAIRTILP (286 aa). The GH84 domain occupies 149–416; sequence RYRGVVEGFY…SVASYAWNPA (268 aa). A protein contacts are provided by Gly-156, Lys-187, and Asp-263. Asp-264 serves as the catalytic Proton donor. A protein is bound by residues Tyr-303, 358–360, Asp-365, and Asn-393; that span reads WWN.

Belongs to the glycosyl hydrolase 84 family. As to quaternary structure, homodimer.

It carries out the reaction 3-O-(N-acetyl-beta-D-glucosaminyl)-L-seryl-[protein] + H2O = N-acetyl-D-glucosamine + L-seryl-[protein]. The catalysed reaction is 3-O-(N-acetyl-beta-D-glucosaminyl)-L-threonyl-[protein] + H2O = L-threonyl-[protein] + N-acetyl-D-glucosamine. With respect to regulation, inhibited by 1,2-dideoxy-2'-methyl-alpha-D-glucopyranoso-[2,1-d]-delta 2'-thiazoline (NAG-thiazoline) and O-(2-acetamido-2-deoxy-D-glucopyranosylidene)amino-N-phenyl-carbamate (PUGNAc). Not inhibited by Streptozotocin. Can hydrolyze the glycosidic link of O-GlcNAcylated proteins. Can use p-nitrophenyl-beta-GlcNAc and 4-methylumbelliferone-GlcNAc as substrates (in vitro). This Bacteroides thetaiotaomicron (strain ATCC 29148 / DSM 2079 / JCM 5827 / CCUG 10774 / NCTC 10582 / VPI-5482 / E50) protein is O-GlcNAcase BT_4395.